Here is a 329-residue protein sequence, read N- to C-terminus: SARTTAPSVFPLAASCVDTSGSMMTLGCLVKGYFPEPVTVKWNSGALTSGVHTFPAVLQSGLYSLTSMVTVPSSQKATCNVAHPASSTKVDKTVEPIRTPZPBPCTCPKCPPPENLGGPSVFIFPPKPKDTLMISLTPRVTCVVVDVSQDEPEVQFTWFVDNKPVGNAETKPRVEQYNTTFRVESVLPIQHQDWLRGKEFKCKVYNKALPAPIEKTISKTKGAPRMPDVYTLPPSRDELSKSKVSVTCLIINFFPADIHVEWASNRVPVSEKEYKNTPPIEDADGSYFLYSKLTVDKSAWDQGTVYTCSVMHEALHNHVTQKAISRSPG.

Cystine bridges form between cysteine 28–cysteine 79, cysteine 142–cysteine 202, and cysteine 248–cysteine 308. An N-linked (GlcNAc...) asparagine glycan is attached at asparagine 178.

Its subcellular location is the secreted. The sequence is that of Ig gamma-2 chain C region from Cavia porcellus (Guinea pig).